The primary structure comprises 505 residues: Putative diacyglycerol O-acyltransferase MT0919 (505 aa).

The active-site Proton acceptor is histidine 167.

Belongs to the long-chain O-acyltransferase family.

The catalysed reaction is an acyl-CoA + a 1,2-diacyl-sn-glycerol = a triacyl-sn-glycerol + CoA. It functions in the pathway glycerolipid metabolism; triacylglycerol biosynthesis. The polypeptide is Putative diacyglycerol O-acyltransferase MT0919 (Mycobacterium tuberculosis (strain CDC 1551 / Oshkosh)).